We begin with the raw amino-acid sequence, 465 residues long: Argininosuccinate lyase (465 aa).

The protein belongs to the lyase 1 family. Argininosuccinate lyase subfamily.

It is found in the cytoplasm. It carries out the reaction 2-(N(omega)-L-arginino)succinate = fumarate + L-arginine. It functions in the pathway amino-acid biosynthesis; L-arginine biosynthesis; L-arginine from L-ornithine and carbamoyl phosphate: step 3/3. This chain is Argininosuccinate lyase, found in Methylococcus capsulatus (strain ATCC 33009 / NCIMB 11132 / Bath).